The sequence spans 252 residues: Adenosylcobinamide-GDP ribazoletransferase (252 aa).

5 helical membrane-spanning segments follow: residues 33–53 (FISPLMVGIITGIIDWFVVLL), 105–125 (TGSGAIGLFLVYFSIFLIATL), 132–152 (LWFFLPSEVLARASAISLLGL), 184–204 (FAILFSSPVLILAYVILLLVF), and 215–235 (MSGDIVGAIITLSFPIYLLVA).

Belongs to the CobS family. Mg(2+) serves as cofactor.

The protein resides in the cell membrane. The catalysed reaction is alpha-ribazole + adenosylcob(III)inamide-GDP = adenosylcob(III)alamin + GMP + H(+). It carries out the reaction alpha-ribazole 5'-phosphate + adenosylcob(III)inamide-GDP = adenosylcob(III)alamin 5'-phosphate + GMP + H(+). The protein operates within cofactor biosynthesis; adenosylcobalamin biosynthesis; adenosylcobalamin from cob(II)yrinate a,c-diamide: step 7/7. In terms of biological role, joins adenosylcobinamide-GDP and alpha-ribazole to generate adenosylcobalamin (Ado-cobalamin). Also synthesizes adenosylcobalamin 5'-phosphate from adenosylcobinamide-GDP and alpha-ribazole 5'-phosphate. This Sulfolobus acidocaldarius (strain ATCC 33909 / DSM 639 / JCM 8929 / NBRC 15157 / NCIMB 11770) protein is Adenosylcobinamide-GDP ribazoletransferase.